The primary structure comprises 350 residues: Heat-inducible transcription repressor HrcA (350 aa).

This sequence belongs to the HrcA family.

In terms of biological role, negative regulator of class I heat shock genes (grpE-dnaK-dnaJ and groELS operons). Prevents heat-shock induction of these operons. This is Heat-inducible transcription repressor HrcA from Xanthomonas axonopodis pv. citri (strain 306).